Reading from the N-terminus, the 244-residue chain is Lytic polysaccharide monooxygenase-like protein ANIA_04702 (244 aa).

The signal sequence occupies residues 1–23 (MLMSTSPSPWLAAAMLCIGLANA). Residue H24 participates in Cu(2+) binding. At H24 the chain carries Methylhistidine. N57, N80, N118, N159, N192, and N198 each carry an N-linked (GlcNAc...) asparagine glycan. Cystine bridges form between C72/C177 and C142/C196. The GPI-anchor amidated asparagine moiety is linked to residue N215. Residues 216 to 244 (AGLEAVTVPSFLTAVVPTFLGIAYGLLMA) constitute a propeptide, removed in mature form.

The protein belongs to the X325 family. The cofactor is Cu(2+). The catalytically essential N-terminal histidine His-24 is post-translationally modified by methylation to prevent protonation of the histidine side chain, and protect the critical active site of the enzyme from oxidative damage.

It localises to the cell membrane. Lytic polysaccharide monooxygenase-like protein that has diverged to biological functions other than polysaccharide degradation since it does not perform oxidative cleavage of polysaccharides. Acts as a cell surface-bound protein that functions in the copper-accumulation pathway. May also act as the major cell wall sensor that regulates MAP kinase-dependent hyphal anastomosis, the fusion of hyphal cells. This chain is Lytic polysaccharide monooxygenase-like protein ANIA_04702, found in Emericella nidulans (strain FGSC A4 / ATCC 38163 / CBS 112.46 / NRRL 194 / M139) (Aspergillus nidulans).